Reading from the N-terminus, the 1273-residue chain is DNA polymerase 037L (1273 aa).

Positions 679–837 form a coiled coil; that stretch reads IRKNAITEEL…ENKSKEDIDE (159 aa).

This sequence belongs to the DNA polymerase type-B family.

It carries out the reaction DNA(n) + a 2'-deoxyribonucleoside 5'-triphosphate = DNA(n+1) + diphosphate. Functionally, DNA-directed DNA polymerase involved in viral DNA replication. In Invertebrate iridescent virus 6 (IIV-6), this protein is DNA polymerase 037L (DPOL).